Reading from the N-terminus, the 90-residue chain is uncharacterized protein (90 aa).

Lysine 88 participates in a covalent cross-link: Isoglutamyl lysine isopeptide (Lys-Gln) (interchain with Q-Cter in protein Pup).

This is an uncharacterized protein from Mycolicibacterium smegmatis (strain ATCC 700084 / mc(2)155) (Mycobacterium smegmatis).